The primary structure comprises 172 residues: Small ribosomal subunit protein bS6 (172 aa).

The tract at residues 100 to 172 (LPAKRVVKTS…ENKEIEKKED (73 aa)) is disordered. Over residues 107–172 (KTSEKNVKED…ENKEIEKKED (66 aa)) the composition is skewed to basic and acidic residues.

Belongs to the bacterial ribosomal protein bS6 family.

Binds together with bS18 to 16S ribosomal RNA. The sequence is that of Small ribosomal subunit protein bS6 from Prochlorococcus marinus (strain MIT 9211).